We begin with the raw amino-acid sequence, 299 residues long: Bifunctional protein FolD (299 aa).

NADP(+)-binding positions include 168–170, Ser193, and Ile234; that span reads GRS.

Belongs to the tetrahydrofolate dehydrogenase/cyclohydrolase family. As to quaternary structure, homodimer.

The enzyme catalyses (6R)-5,10-methylene-5,6,7,8-tetrahydrofolate + NADP(+) = (6R)-5,10-methenyltetrahydrofolate + NADPH. It carries out the reaction (6R)-5,10-methenyltetrahydrofolate + H2O = (6R)-10-formyltetrahydrofolate + H(+). The protein operates within one-carbon metabolism; tetrahydrofolate interconversion. Catalyzes the oxidation of 5,10-methylenetetrahydrofolate to 5,10-methenyltetrahydrofolate and then the hydrolysis of 5,10-methenyltetrahydrofolate to 10-formyltetrahydrofolate. The protein is Bifunctional protein FolD of Rhizobium johnstonii (strain DSM 114642 / LMG 32736 / 3841) (Rhizobium leguminosarum bv. viciae).